A 191-amino-acid chain; its full sequence is Repressor Rok (191 aa).

Residues 2 to 43 adopt a coiled-coil conformation; the sequence is FNEREALRLRLEQLNEAEVKVIREYQIERDKIYAKLRELDRN. Residues 75–96 are compositionally biased toward low complexity; it reads SYQPQSQQQSVQPQLQSISSLP. The disordered stretch occupies residues 75 to 116; that stretch reads SYQPQSQQQSVQPQLQSISSLPAGIPDGTTRRRRGTARPGSK. The interval 95–191 is DNA-binding; that stretch reads LPAGIPDGTT…EIESAESANE (97 aa).

The protein resides in the cytoplasm. It localises to the nucleoid. Its function is as follows. Repressor of comK, the master regulator of competence development. Overexpression seems to be lethal. Represses at least 20 genes that specify membrane-localized and secreted proteins, including some that encode products with antibiotic activity. Binds to many AT-rich sites in the chromosome, many of which are known or thought to derive from horizontal gene transfer; helps keep mobile element ICEBs1 quiescent in the genome. Binds to its own promoter and is thus probably autoregulatory. This Bacillus subtilis (strain 168) protein is Repressor Rok.